Here is a 377-residue protein sequence, read N- to C-terminus: Chaperone protein DnaJ (377 aa).

The 66-residue stretch at 5 to 70 (DYYQILGIPK…EKRSAYDQYG (66 aa)) folds into the J domain. A CR-type zinc finger spans residues 132–210 (GIKKEIQIPT…CHGQGRVETY (79 aa)). Zn(2+) is bound by residues C145, C148, C162, C165, C184, C187, C198, and C201. CXXCXGXG motif repeat units follow at residues 145–152 (CKTCYGSG), 162–169 (CSTCHGKG), 184–191 (CPTCHGKG), and 198–205 (CNLCHGQG).

It belongs to the DnaJ family. Homodimer. Zn(2+) is required as a cofactor.

The protein localises to the cytoplasm. Functionally, participates actively in the response to hyperosmotic and heat shock by preventing the aggregation of stress-denatured proteins and by disaggregating proteins, also in an autonomous, DnaK-independent fashion. Unfolded proteins bind initially to DnaJ; upon interaction with the DnaJ-bound protein, DnaK hydrolyzes its bound ATP, resulting in the formation of a stable complex. GrpE releases ADP from DnaK; ATP binding to DnaK triggers the release of the substrate protein, thus completing the reaction cycle. Several rounds of ATP-dependent interactions between DnaJ, DnaK and GrpE are required for fully efficient folding. Also involved, together with DnaK and GrpE, in the DNA replication of plasmids through activation of initiation proteins. The sequence is that of Chaperone protein DnaJ from Buchnera aphidicola subsp. Acyrthosiphon pisum (strain 5A).